We begin with the raw amino-acid sequence, 238 residues long: Fibroblast growth factor-binding protein 1 (238 aa).

A signal peptide spans 1-20 (MRIHGLILLSFLLLAAQVLS). Residues 25–61 (KTAKNVPDSTTEEDMSPSLGKARNKQRSRTSKSMTHG) form a disordered region. 3 cysteine pairs are disulfide-bonded: cysteine 71-cysteine 88, cysteine 97-cysteine 130, and cysteine 106-cysteine 142. Residue serine 164 is glycosylated (O-linked (GalNAc...) serine). Residues 197 to 238 (KDSECLEDPDVLTQRKTALEFCGESWSSFCTFFLNMLQATSC) are sufficient for interaction with FGF2 and FGF2-induced effects. 2 disulfide bridges follow: cysteine 201/cysteine 238 and cysteine 218/cysteine 226.

It belongs to the fibroblast growth factor-binding protein family. In terms of assembly, found in a complex with FGFBP1, FGF1 and FGF2. Interacts with FGF1, FGF2, FGF7, FGF10, FGF22 and HSPG2. As to expression, expressed in gut, eye, thymus, skin, lung, tongue, Purkinje cells and cerebral chorioid plexus (at protein level).

It is found in the secreted. The protein localises to the extracellular space. It localises to the cell membrane. Acts as a carrier protein that release fibroblast-binding factors (FGFs) from the extracellular matrix (EM) storage and thus enhance the mitogenic activity of FGFs. Enhances FGF2 signaling during tissue repair, angiogenesis and in tumor growth. The sequence is that of Fibroblast growth factor-binding protein 1 (Fgfbp1) from Rattus norvegicus (Rat).